The following is a 162-amino-acid chain: tRNA (cytidine(34)-2'-O)-methyltransferase (162 aa).

4 residues coordinate S-adenosyl-L-methionine: Leu83, Gly105, Ile127, and Ser135.

It belongs to the class IV-like SAM-binding methyltransferase superfamily. RNA methyltransferase TrmH family. TrmL subfamily. In terms of assembly, homodimer.

It is found in the cytoplasm. The enzyme catalyses cytidine(34) in tRNA + S-adenosyl-L-methionine = 2'-O-methylcytidine(34) in tRNA + S-adenosyl-L-homocysteine + H(+). It carries out the reaction 5-carboxymethylaminomethyluridine(34) in tRNA(Leu) + S-adenosyl-L-methionine = 5-carboxymethylaminomethyl-2'-O-methyluridine(34) in tRNA(Leu) + S-adenosyl-L-homocysteine + H(+). Its function is as follows. Methylates the ribose at the nucleotide 34 wobble position in the two leucyl isoacceptors tRNA(Leu)(CmAA) and tRNA(Leu)(cmnm5UmAA). Catalyzes the methyl transfer from S-adenosyl-L-methionine to the 2'-OH of the wobble nucleotide. In Yersinia pestis, this protein is tRNA (cytidine(34)-2'-O)-methyltransferase.